The following is a 147-amino-acid chain: uncharacterized protein (147 aa).

The 137-residue stretch at 11-147 folds into the HTH marR-type domain; that stretch reads NTSPGFLLWQ…SGLQELLKHE (137 aa). The H-T-H motif DNA-binding region spans 61–84; sequence QKKLASFSQTNIMMVSEVVRTLEK.

This is an uncharacterized protein from Bacillus subtilis (strain 168).